Consider the following 194-residue polypeptide: MKIWTSEHVFDHPWETVTTAAMQKYPNPMNPSVVGVDVLDRHIDPSGKLHSHRLLSTEWGLPSIVKSLIGAARTKTYVQEHSVVDPVEKTMELKSTNISFTNMVSVDERLIYKPHPQDPDKTILTQEAIITVKGVSLSSYLEGLMASTISSNASKGREAMEWVIHKLNAEIEELTASARGTIRTPMAAAAFAEK.

The region spanning 1-172 is the PRELI/MSF1 domain; that stretch reads MKIWTSEHVF…VIHKLNAEIE (172 aa). A phosphoserine mark is found at serine 46 and serine 51.

It belongs to the slowmo family.

This Macaca fascicularis (Crab-eating macaque) protein is PRELI domain containing protein 3B (PRELID3B).